The chain runs to 562 residues: NAD-dependent malic enzyme (562 aa).

The active-site Proton donor is Tyr101. Arg154 lines the NAD(+) pocket. The active-site Proton acceptor is the Lys172. Glu243, Asp244, and Asp267 together coordinate a divalent metal cation. NAD(+) contacts are provided by Asp267 and Asn415.

Belongs to the malic enzymes family. As to quaternary structure, homotetramer. The cofactor is Mg(2+). It depends on Mn(2+) as a cofactor.

It catalyses the reaction (S)-malate + NAD(+) = pyruvate + CO2 + NADH. It carries out the reaction oxaloacetate + H(+) = pyruvate + CO2. The sequence is that of NAD-dependent malic enzyme from Shewanella sp. (strain MR-4).